A 355-amino-acid polypeptide reads, in one-letter code: UDP-N-acetylglucosamine--N-acetylmuramyl-(pentapeptide) pyrophosphoryl-undecaprenol N-acetylglucosamine transferase (355 aa).

Residues 14-16, Asn126, Arg162, Ser190, Ile243, 262-267, and Gln287 contribute to the UDP-N-acetyl-alpha-D-glucosamine site; these read TGG and ALTVSE.

It belongs to the glycosyltransferase 28 family. MurG subfamily.

The protein localises to the cell inner membrane. It catalyses the reaction di-trans,octa-cis-undecaprenyl diphospho-N-acetyl-alpha-D-muramoyl-L-alanyl-D-glutamyl-meso-2,6-diaminopimeloyl-D-alanyl-D-alanine + UDP-N-acetyl-alpha-D-glucosamine = di-trans,octa-cis-undecaprenyl diphospho-[N-acetyl-alpha-D-glucosaminyl-(1-&gt;4)]-N-acetyl-alpha-D-muramoyl-L-alanyl-D-glutamyl-meso-2,6-diaminopimeloyl-D-alanyl-D-alanine + UDP + H(+). It participates in cell wall biogenesis; peptidoglycan biosynthesis. Cell wall formation. Catalyzes the transfer of a GlcNAc subunit on undecaprenyl-pyrophosphoryl-MurNAc-pentapeptide (lipid intermediate I) to form undecaprenyl-pyrophosphoryl-MurNAc-(pentapeptide)GlcNAc (lipid intermediate II). The chain is UDP-N-acetylglucosamine--N-acetylmuramyl-(pentapeptide) pyrophosphoryl-undecaprenol N-acetylglucosamine transferase from Vibrio vulnificus (strain YJ016).